Consider the following 388-residue polypeptide: S-adenosylmethionine synthase (388 aa).

Position 17 (H17) interacts with ATP. Residue D19 coordinates Mg(2+). A K(+)-binding site is contributed by E45. E58 and Q102 together coordinate L-methionine. The tract at residues 102–112 is flexible loop; that stretch reads QSVHIAQGVDA. Residues 167-169, D241, 247-248, A264, and K268 each bind ATP; these read DAK and RK. D241 provides a ligand contact to L-methionine. L-methionine is bound at residue K272.

It belongs to the AdoMet synthase family. As to quaternary structure, homotetramer; dimer of dimers. It depends on Mg(2+) as a cofactor. K(+) serves as cofactor.

The protein resides in the cytoplasm. It catalyses the reaction L-methionine + ATP + H2O = S-adenosyl-L-methionine + phosphate + diphosphate. It participates in amino-acid biosynthesis; S-adenosyl-L-methionine biosynthesis; S-adenosyl-L-methionine from L-methionine: step 1/1. Catalyzes the formation of S-adenosylmethionine (AdoMet) from methionine and ATP. The overall synthetic reaction is composed of two sequential steps, AdoMet formation and the subsequent tripolyphosphate hydrolysis which occurs prior to release of AdoMet from the enzyme. The chain is S-adenosylmethionine synthase from Maricaulis maris (strain MCS10) (Caulobacter maris).